The chain runs to 240 residues: Citrate synthase-lysine N-methyltransferase CSKMT, mitochondrial (240 aa).

Residues 1 to 28 constitute a mitochondrion transit peptide; it reads MAALRRMLHLPSLMMGTCRPFAGSLADS.

The protein belongs to the methyltransferase superfamily.

The protein resides in the mitochondrion. It carries out the reaction L-lysyl-[citrate synthase] + S-adenosyl-L-methionine = N(6)-methyl-L-lysyl-[citrate synthase] + S-adenosyl-L-homocysteine + H(+). The enzyme catalyses N(6)-methyl-L-lysyl-[citrate synthase] + S-adenosyl-L-methionine = N(6),N(6)-dimethyl-L-lysyl-[citrate synthase] + S-adenosyl-L-homocysteine + H(+). The catalysed reaction is N(6),N(6)-dimethyl-L-lysyl-[citrate synthase] + S-adenosyl-L-methionine = N(6),N(6),N(6)-trimethyl-L-lysyl-[citrate synthase] + S-adenosyl-L-homocysteine + H(+). Its activity is regulated as follows. Citrate synthase-lysine methyltransferase activity is inhibited by S-adenosylhomocysteine (AdoHcy) and oxaloacetate (OAA). In terms of biological role, protein-lysine methyltransferase that selectively trimethylates citrate synthase (CS) in mitochondria. Seems to conduct trimethylation in a highly distributive manner rather than in a processive manner, and thus introduces a single methyl group per binding event. In Homo sapiens (Human), this protein is Citrate synthase-lysine N-methyltransferase CSKMT, mitochondrial.